The following is a 123-amino-acid chain: Keratin-associated protein 2-2 (123 aa).

Residues 5 to 112 (CCGSTFSSLS…SVQSPCGQPT (108 aa)) form an 11 X 5 AA repeats of C-C-[CDPQRWG]-[APRS]-[CIPSTVD] region.

Belongs to the KRTAP type 2 family. Interacts with hair keratins.

Its function is as follows. In the hair cortex, hair keratin intermediate filaments are embedded in an interfilamentous matrix, consisting of hair keratin-associated proteins (KRTAP), which are essential for the formation of a rigid and resistant hair shaft through their extensive disulfide bond cross-linking with abundant cysteine residues of hair keratins. The matrix proteins include the high-sulfur and high-glycine-tyrosine keratins. In Homo sapiens (Human), this protein is Keratin-associated protein 2-2 (KRTAP2-2).